The primary structure comprises 478 residues: Argininosuccinate synthase (478 aa).

Residues 17–25 and Ala43 contribute to the ATP site; that span reads AFSGGLDTS. Residue Tyr99 participates in L-citrulline binding. ATP is bound by residues Gly129 and Thr131. 3 residues coordinate L-aspartate: Thr131, Asn135, and Asp136. L-citrulline is bound at residue Asn135. Asp136 contributes to the ATP binding site. The L-citrulline site is built by Arg139 and Ser192. Asp194 is an ATP binding site. Positions 201, 203, and 280 each coordinate L-citrulline.

The protein belongs to the argininosuccinate synthase family. Type 2 subfamily. As to quaternary structure, homotetramer.

It localises to the cytoplasm. The enzyme catalyses L-citrulline + L-aspartate + ATP = 2-(N(omega)-L-arginino)succinate + AMP + diphosphate + H(+). Its pathway is amino-acid biosynthesis; L-arginine biosynthesis; L-arginine from L-ornithine and carbamoyl phosphate: step 2/3. This is Argininosuccinate synthase from Leifsonia xyli subsp. xyli (strain CTCB07).